We begin with the raw amino-acid sequence, 160 residues long: Anaerobic nitrite reductase MHB1 (160 aa).

The Globin domain occupies 8–157 (GFTEEQEALV…LVNAIKSEMK (150 aa)). Positions 41-45 (EIAPS) match the Homodimerization motif. Heme b is bound by residues Ser-51, Lys-65, His-69, Lys-99, and His-104. The Homodimerization motif lies at 111-123 (DEHFEVTKFALLE).

The protein belongs to the plant globin family. Homodimer. Heme b serves as cofactor. As to expression, root specific.

Its subcellular location is the nucleus matrix. The protein resides in the cytoplasm. The enzyme catalyses Fe(III)-heme b-[protein] + nitric oxide + H2O = Fe(II)-heme b-[protein] + nitrite + 2 H(+). Phytoglobin that reduces nitrite to nitric oxide (NO) under anoxic conditions (e.g. during flooding or in waterlogged soil) and upon root nodulation. Required for general plant development and during nodulation, especially for the onset of symbiosis. Monitors nitric oxide (NO) levels during early phase of the nitrogen-fixing symbiosis and buffers oxygen in functioning nodules. May not function as an oxygen storage or transport protein. Has an unusually high affinity for O(2) through a hexacoordinate heme iron because of a very low dissociation constant. The protein is Anaerobic nitrite reductase MHB1 of Medicago sativa (Alfalfa).